Reading from the N-terminus, the 246-residue chain is Adenosine 5'-phosphosulfate reductase (246 aa).

[4Fe-4S] cluster contacts are provided by Cys131, Cys132, Cys214, and Cys217. Cys242 serves as the catalytic Nucleophile; cysteine thiosulfonate intermediate.

This sequence belongs to the PAPS reductase family. CysH subfamily. The cofactor is [4Fe-4S] cluster.

The protein resides in the cytoplasm. It carries out the reaction [thioredoxin]-disulfide + sulfite + AMP + 2 H(+) = adenosine 5'-phosphosulfate + [thioredoxin]-dithiol. It participates in sulfur metabolism; hydrogen sulfide biosynthesis; sulfite from sulfate. Catalyzes the formation of sulfite from adenosine 5'-phosphosulfate (APS) using thioredoxin as an electron donor. In Neisseria meningitidis serogroup B (strain ATCC BAA-335 / MC58), this protein is Adenosine 5'-phosphosulfate reductase.